A 156-amino-acid chain; its full sequence is Large ribosomal subunit protein uL15 (156 aa).

The interval 25-49 (RGIGCGKGKTSGRGHKGQKARSGTS) is disordered. Positions 34–43 (TSGRGHKGQK) are enriched in basic residues.

This sequence belongs to the universal ribosomal protein uL15 family. In terms of assembly, part of the 50S ribosomal subunit.

Functionally, binds to the 23S rRNA. This is Large ribosomal subunit protein uL15 from Wolbachia sp. subsp. Brugia malayi (strain TRS).